The chain runs to 290 residues: Ribosomal RNA small subunit methyltransferase A (290 aa).

S-adenosyl-L-methionine-binding residues include Asn-27, Leu-29, Gly-54, Glu-75, Asp-100, and Asn-125.

Belongs to the class I-like SAM-binding methyltransferase superfamily. rRNA adenine N(6)-methyltransferase family. RsmA subfamily.

Its subcellular location is the cytoplasm. It carries out the reaction adenosine(1518)/adenosine(1519) in 16S rRNA + 4 S-adenosyl-L-methionine = N(6)-dimethyladenosine(1518)/N(6)-dimethyladenosine(1519) in 16S rRNA + 4 S-adenosyl-L-homocysteine + 4 H(+). Its function is as follows. Specifically dimethylates two adjacent adenosines (A1518 and A1519) in the loop of a conserved hairpin near the 3'-end of 16S rRNA in the 30S particle. May play a critical role in biogenesis of 30S subunits. The protein is Ribosomal RNA small subunit methyltransferase A of Streptococcus agalactiae serotype Ia (strain ATCC 27591 / A909 / CDC SS700).